The following is a 703-amino-acid chain: WD repeat-containing protein pop2 (703 aa).

Composition is skewed to polar residues over residues M1–P27, E63–S73, and S156–P178. 2 disordered regions span residues M1–S73 and S156–S180. An interaction with pop1 region spans residues M1 to V170. Positions K236–M283 constitute an F-box domain. WD repeat units lie at residues G389 to N417, G429 to K473, G505 to R533, G545 to D575, G587 to D615, and L625 to D654.

As to quaternary structure, homodimer and heterodimer with pop1. Binds to cul1, pip1 and phosphorylated cdc18.

It localises to the cytoplasm. Its subcellular location is the nucleus. Its function is as follows. Involved in maintenance of ploidy through proteasome dependent degradation of CDK inhibitor rum1 and S-phase initiator cdc18. Functions as a recognition factor for rum1 and cdc18, which are subsequently ubiquitinated and targeted to the 26S proteasome for degradation. Together with pop1, required for cig2 instability during G2 and M phase and cig2 degradation in exponentially growing cells. The chain is WD repeat-containing protein pop2 (pop2) from Schizosaccharomyces pombe (strain 972 / ATCC 24843) (Fission yeast).